The chain runs to 143 residues: Sirohydrochlorin cobaltochelatase (143 aa).

H9 (proton acceptor) is an active-site residue. A Co(2+)-binding site is contributed by H9. H9 is a Ni(2+) binding site. Residues E45 and 70 to 75 (LAHGIH) each bind substrate. Position 75 (H75) interacts with Co(2+). H75 lines the Ni(2+) pocket.

This sequence belongs to the CbiX family. CbiXS subfamily. In terms of assembly, homotetramer; dimer of dimers.

It catalyses the reaction Co-sirohydrochlorin + 2 H(+) = sirohydrochlorin + Co(2+). It carries out the reaction Ni-sirohydrochlorin + 2 H(+) = sirohydrochlorin + Ni(2+). It functions in the pathway cofactor biosynthesis; adenosylcobalamin biosynthesis; cob(II)yrinate a,c-diamide from sirohydrochlorin (anaerobic route): step 1/10. Its function is as follows. Catalyzes the insertion of Co(2+) into sirohydrochlorin as part of the anaerobic pathway to cobalamin biosynthesis. Involved in the biosynthesis of the unique nickel-containing tetrapyrrole coenzyme F430, the prosthetic group of methyl-coenzyme M reductase (MCR), which plays a key role in methanogenesis and anaerobic methane oxidation. Catalyzes the insertion of Ni(2+) into sirohydrochlorin to yield Ni-sirohydrochlorin. This is Sirohydrochlorin cobaltochelatase from Methanocaldococcus jannaschii (strain ATCC 43067 / DSM 2661 / JAL-1 / JCM 10045 / NBRC 100440) (Methanococcus jannaschii).